We begin with the raw amino-acid sequence, 119 residues long: Large ribosomal subunit protein uL22 (119 aa).

The protein belongs to the universal ribosomal protein uL22 family. In terms of assembly, part of the 50S ribosomal subunit.

In terms of biological role, this protein binds specifically to 23S rRNA; its binding is stimulated by other ribosomal proteins, e.g. L4, L17, and L20. It is important during the early stages of 50S assembly. It makes multiple contacts with different domains of the 23S rRNA in the assembled 50S subunit and ribosome. Its function is as follows. The globular domain of the protein is located near the polypeptide exit tunnel on the outside of the subunit, while an extended beta-hairpin is found that lines the wall of the exit tunnel in the center of the 70S ribosome. The protein is Large ribosomal subunit protein uL22 of Chlorobium phaeobacteroides (strain DSM 266 / SMG 266 / 2430).